The following is a 390-amino-acid chain: Putative nickel insertion protein (390 aa).

The protein belongs to the LarC family.

In Geobacter metallireducens (strain ATCC 53774 / DSM 7210 / GS-15), this protein is Putative nickel insertion protein.